We begin with the raw amino-acid sequence, 1778 residues long: Protein TIC 214 (1778 aa).

The next 6 membrane-spanning stretches (helical) occupy residues 18–38 (IINSVVVVGLYYGFLTTFSIG), 67–87 (FIAGQLMMFISIYYAPLHLAL), 90–110 (PHTITVLALPYLLFHFFWNNN), 132–152 (VFLNNLIFQLFNHFILPSSML), 175–195 (VGWLIGHILFMKWVGLVLVWI), and 226–246 (IFSILLFITCVYYLGRIPSPI). Positions 1498–1520 (GQGELESDNEKKRNPESALSNQE) are disordered.

Belongs to the TIC214 family. In terms of assembly, part of the Tic complex.

It localises to the plastid. The protein resides in the chloroplast inner membrane. Functionally, involved in protein precursor import into chloroplasts. May be part of an intermediate translocation complex acting as a protein-conducting channel at the inner envelope. In Arabis hirsuta (Hairy rock-cress), this protein is Protein TIC 214.